The chain runs to 316 residues: Taste receptor type 2 member 3 (316 aa).

At 1-6 the chain is on the extracellular side; sequence MMGLTE. A helical membrane pass occupies residues 7–27; the sequence is GVFLILSGTQFTLGILVNCFI. The Cytoplasmic segment spans residues 28–42; that stretch reads ELVNGSSWFKTKRMS. The chain crosses the membrane as a helical span at residues 43 to 63; it reads LSDFIITTLALLRIILLCIIL. At 64 to 94 the chain is on the extracellular side; the sequence is TDSFLIEFSPNTHDSGIIMQIIDVSWTFTNH. A helical transmembrane segment spans residues 95–115; it reads LSIWLATCLGVLYCLKIASFS. Topologically, residues 116–128 are cytoplasmic; that stretch reads HPTFLWLKWRVSR. The chain crosses the membrane as a helical span at residues 129–149; it reads VMVWMLLGALLLSCGSTASLI. Over 150–186 the chain is Extracellular; that stretch reads NEFKLYSVFRGIEATRNVTEHFRKKRSEYYLIHVLGT. Asparagine 166 carries an N-linked (GlcNAc...) asparagine glycan. Residues 187–207 traverse the membrane as a helical segment; the sequence is LWYLPPLIVSLASYSLLIFSL. Residues 208-234 lie on the Cytoplasmic side of the membrane; sequence GRHTRQMLQNGTSSRDPTTEAHKRAIR. The chain crosses the membrane as a helical span at residues 235–255; the sequence is IILSFFFLFLLYFLAFLIASF. Residues 256–266 lie on the Extracellular side of the membrane; the sequence is GNFLPKTKMAK. A helical transmembrane segment spans residues 267–287; it reads MIGEVMTMFYPAGHSFILILG. The Cytoplasmic portion of the chain corresponds to 288 to 316; it reads NSKLKQTFVVMLRCESGHLKPGSKGPIFS.

This sequence belongs to the G-protein coupled receptor T2R family. In terms of tissue distribution, expressed in subsets of taste receptor cells of the tongue and palate epithelium and exclusively in gustducin-positive cells. Expressed in the antrum and fundus (part of the stomach), duodenum and in gastric endocrine cells.

It is found in the membrane. In terms of biological role, gustducin-coupled receptor implicated in the perception of bitter compounds in the oral cavity and the gastrointestinal tract. Signals through PLCB2 and the calcium-regulated cation channel TRPM5. The sequence is that of Taste receptor type 2 member 3 (TAS2R3) from Homo sapiens (Human).